Here is a 117-residue protein sequence, read N- to C-terminus: Immunoglobulin heavy variable 3-5 (117 aa).

Residues 1–18 form the signal peptide; that stretch reads MKMFTLLYLLTVVPGILS. The region spanning 19–117 is the Ig-like domain; sequence DVQLQESGPG…EDTATYYCAR (99 aa). Cysteine 40 and cysteine 115 are joined by a disulfide.

This chain is Immunoglobulin heavy variable 3-5, found in Mus musculus (Mouse).